A 640-amino-acid polypeptide reads, in one-letter code: Probable threonine--tRNA ligase, cytoplasmic (640 aa).

Positions 1-63 (MYEVKLKVEL…LKDCKLELMT (63 aa)) constitute a TGS domain.

It belongs to the class-II aminoacyl-tRNA synthetase family.

It is found in the cytoplasm. The enzyme catalyses tRNA(Thr) + L-threonine + ATP = L-threonyl-tRNA(Thr) + AMP + diphosphate + H(+). The chain is Probable threonine--tRNA ligase, cytoplasmic from Encephalitozoon cuniculi (strain GB-M1) (Microsporidian parasite).